Consider the following 283-residue polypeptide: 4-hydroxy-tetrahydrodipicolinate synthase (283 aa).

Residue threonine 46 participates in pyruvate binding. The Proton donor/acceptor role is filled by tyrosine 134. Lysine 162 acts as the Schiff-base intermediate with substrate in catalysis. Isoleucine 208 serves as a coordination point for pyruvate.

It belongs to the DapA family. As to quaternary structure, homotetramer; dimer of dimers.

The protein resides in the cytoplasm. It carries out the reaction L-aspartate 4-semialdehyde + pyruvate = (2S,4S)-4-hydroxy-2,3,4,5-tetrahydrodipicolinate + H2O + H(+). Its pathway is amino-acid biosynthesis; L-lysine biosynthesis via DAP pathway; (S)-tetrahydrodipicolinate from L-aspartate: step 3/4. Catalyzes the condensation of (S)-aspartate-beta-semialdehyde [(S)-ASA] and pyruvate to 4-hydroxy-tetrahydrodipicolinate (HTPA). This is 4-hydroxy-tetrahydrodipicolinate synthase from Methanothermobacter thermautotrophicus (strain ATCC 29096 / DSM 1053 / JCM 10044 / NBRC 100330 / Delta H) (Methanobacterium thermoautotrophicum).